The following is a 253-amino-acid chain: Hydroxyacylglutathione hydrolase (253 aa).

Zn(2+) is bound by residues His59, His61, Asp63, His64, His118, Asp143, and His181.

It belongs to the metallo-beta-lactamase superfamily. Glyoxalase II family. In terms of assembly, monomer. It depends on Zn(2+) as a cofactor.

It catalyses the reaction an S-(2-hydroxyacyl)glutathione + H2O = a 2-hydroxy carboxylate + glutathione + H(+). The protein operates within secondary metabolite metabolism; methylglyoxal degradation; (R)-lactate from methylglyoxal: step 2/2. Functionally, thiolesterase that catalyzes the hydrolysis of S-D-lactoyl-glutathione to form glutathione and D-lactic acid. This Prochlorococcus marinus (strain MIT 9211) protein is Hydroxyacylglutathione hydrolase.